The primary structure comprises 299 residues: Recombination-associated protein RdgC (299 aa).

This sequence belongs to the RdgC family.

The protein localises to the cytoplasm. Its subcellular location is the nucleoid. May be involved in recombination. The sequence is that of Recombination-associated protein RdgC from Neisseria meningitidis serogroup B (strain ATCC BAA-335 / MC58).